Consider the following 157-residue polypeptide: Crossover junction endodeoxyribonuclease RuvC (157 aa).

Active-site residues include D7, E67, and D140. D7, E67, and D140 together coordinate Mg(2+).

Belongs to the RuvC family. In terms of assembly, homodimer which binds Holliday junction (HJ) DNA. The HJ becomes 2-fold symmetrical on binding to RuvC with unstacked arms; it has a different conformation from HJ DNA in complex with RuvA. In the full resolvosome a probable DNA-RuvA(4)-RuvB(12)-RuvC(2) complex forms which resolves the HJ. The cofactor is Mg(2+).

The protein localises to the cytoplasm. The catalysed reaction is Endonucleolytic cleavage at a junction such as a reciprocal single-stranded crossover between two homologous DNA duplexes (Holliday junction).. Functionally, the RuvA-RuvB-RuvC complex processes Holliday junction (HJ) DNA during genetic recombination and DNA repair. Endonuclease that resolves HJ intermediates. Cleaves cruciform DNA by making single-stranded nicks across the HJ at symmetrical positions within the homologous arms, yielding a 5'-phosphate and a 3'-hydroxyl group; requires a central core of homology in the junction. The consensus cleavage sequence is 5'-(A/T)TT(C/G)-3'. Cleavage occurs on the 3'-side of the TT dinucleotide at the point of strand exchange. HJ branch migration catalyzed by RuvA-RuvB allows RuvC to scan DNA until it finds its consensus sequence, where it cleaves and resolves the cruciform DNA. This is Crossover junction endodeoxyribonuclease RuvC from Rickettsia conorii (strain ATCC VR-613 / Malish 7).